The primary structure comprises 70 residues: Large ribosomal subunit protein bL31 (70 aa).

Cys-16, Cys-18, Cys-37, and Cys-40 together coordinate Zn(2+).

The protein belongs to the bacterial ribosomal protein bL31 family. Type A subfamily. Part of the 50S ribosomal subunit. Zn(2+) serves as cofactor.

Binds the 23S rRNA. The protein is Large ribosomal subunit protein bL31 of Salmonella agona (strain SL483).